Consider the following 176-residue polypeptide: Disulfide bond formation protein B (176 aa).

Residues 1-14 (MLRFLNQCSQGRGA) lie on the Cytoplasmic side of the membrane. A helical transmembrane segment spans residues 15–31 (WLLMAFTALALELTALW). The Periplasmic portion of the chain corresponds to 32-49 (FQHVMLLKPCVLCIYERC). Residues cysteine 41 and cysteine 44 are joined by a disulfide bond. The helical transmembrane segment at 50 to 65 (ALFGVLGAALIGAIAP) threads the bilayer. The Cytoplasmic segment spans residues 66–71 (KTPLRY). A helical membrane pass occupies residues 72–89 (VAMVIWLYSAFRGVQLTY). Over 90–144 (EHTMLQLYPSPFATCDFMARFPEWLPLDKWVPQVFVASGDCAERQWEFLGLEMPQ) the chain is Periplasmic. The cysteines at positions 104 and 130 are disulfide-linked. The chain crosses the membrane as a helical span at residues 145–163 (WLLGIFIAYLIVAVLVVIS). Residues 164–176 (QPFKAKKRDLFGR) lie on the Cytoplasmic side of the membrane.

The protein belongs to the DsbB family.

The protein localises to the cell inner membrane. Required for disulfide bond formation in some periplasmic proteins. Acts by oxidizing the DsbA protein. In Escherichia coli O1:K1 / APEC, this protein is Disulfide bond formation protein B.